A 98-amino-acid chain; its full sequence is NADH-ubiquinone oxidoreductase chain 4L (98 aa).

3 helical membrane-spanning segments follow: residues 1–21 (MMSI…GVLI), 28–48 (STLL…ALLI), and 59–79 (APLI…ALLV).

This sequence belongs to the complex I subunit 4L family. As to quaternary structure, core subunit of respiratory chain NADH dehydrogenase (Complex I) which is composed of 45 different subunits.

The protein resides in the mitochondrion inner membrane. It catalyses the reaction a ubiquinone + NADH + 5 H(+)(in) = a ubiquinol + NAD(+) + 4 H(+)(out). In terms of biological role, core subunit of the mitochondrial membrane respiratory chain NADH dehydrogenase (Complex I) which catalyzes electron transfer from NADH through the respiratory chain, using ubiquinone as an electron acceptor. Part of the enzyme membrane arm which is embedded in the lipid bilayer and involved in proton translocation. The sequence is that of NADH-ubiquinone oxidoreductase chain 4L (MT-ND4L) from Lagorchestes hirsutus (Rufous hare-wallaby).